A 230-amino-acid chain; its full sequence is DNA ADP-ribosyl transferase (230 aa).

The DarT domain maps to 26–230 (WIVWHFTHAD…KYVIKPGMYY (205 aa)). NAD(+) contacts are provided by residues 30 to 32 (HFT), Gly39, Leu47, and Arg67. Catalysis depends on Arg67, which acts as the Proton acceptor. Glu183 is an active-site residue.

Belongs to the DarT ADP-ribosyltransferase family. In terms of assembly, interacts with cognate antitoxin DarG (via C-terminus); this heterodimeric complex neutralizes the toxic effect of DarT by preventing ssDNA binding to DarT and consequently inactivating the toxin by direct protein-protein interactions.

The catalysed reaction is a thymidine in DNA + NAD(+) = an N-(ADP-alpha-D-ribosyl)-thymidine in DNA + nicotinamide + H(+). Functionally, toxic component of the hybrid type II/IV toxin-antitoxin (TA) system DarTG, which plays a crucial role in controlling bacterial growth and bacteriophage infection. ADP-ribosylates ssDNA, preferentially in the motif TTTW. In case of phage infection, DarT toxin ADP-ribosylates DNA, which inhibits both viral DNA and RNA synthesis and leads to abortive infection. Its toxic effect is neutralized by cognate antitoxin DarG. The sequence is that of DNA ADP-ribosyl transferase from Mycobacterium bovis (strain BCG / Pasteur 1173P2).